A 20-amino-acid polypeptide reads, in one-letter code: YGGSQGNLIFGKGTKLSVKP.

The disordered stretch occupies residues 1–20; the sequence is YGGSQGNLIFGKGTKLSVKP.

Alpha-beta TR is a heterodimer composed of an alpha and beta chain; disulfide-linked. The alpha-beta TR is associated with the transmembrane signaling CD3 coreceptor proteins to form the TR-CD3 (TcR or TCR). The assembly of alpha-beta TR heterodimers with CD3 occurs in the endoplasmic reticulum where a single alpha-beta TR heterodimer associates with one CD3D-CD3E heterodimer, one CD3G-CD3E heterodimer and one CD247 homodimer forming a stable octameric structure. CD3D-CD3E and CD3G-CD3E heterodimers preferentially associate with TR alpha and TR beta chains, respectively. The association of the CD247 homodimer is the last step of TcR assembly in the endoplasmic reticulum and is required for transport to the cell surface.

The protein resides in the cell membrane. J region of the variable domain of T cell receptor (TR) alpha chain that participates in the antigen recognition. Alpha-beta T cell receptors are antigen specific receptors which are essential to the immune response and are present on the cell surface of T lymphocytes. Recognize peptide-major histocompatibility (MH) (pMH) complexes that are displayed by antigen presenting cells (APC), a prerequisite for efficient T cell adaptive immunity against pathogens. Binding of alpha-beta TR to pMH complex initiates TR-CD3 clustering on the cell surface and intracellular activation of LCK that phosphorylates the ITAM motifs of CD3G, CD3D, CD3E and CD247 enabling the recruitment of ZAP70. In turn, ZAP70 phosphorylates LAT, which recruits numerous signaling molecules to form the LAT signalosome. The LAT signalosome propagates signal branching to three major signaling pathways, the calcium, the mitogen-activated protein kinase (MAPK) kinase and the nuclear factor NF-kappa-B (NF-kB) pathways, leading to the mobilization of transcription factors that are critical for gene expression and essential for T cell growth and differentiation. The T cell repertoire is generated in the thymus, by V-(D)-J rearrangement. This repertoire is then shaped by intrathymic selection events to generate a peripheral T cell pool of self-MH restricted, non-autoaggressive T cells. Post-thymic interaction of alpha-beta TR with the pMH complexes shapes TR structural and functional avidity. The protein is T cell receptor alpha joining 42 of Homo sapiens (Human).